The following is a 441-amino-acid chain: UBX domain-containing protein 6 (441 aa).

The mediates interaction with LMAN1 stretch occupies residues 1–10; that stretch reads MKKFFQEIKA. Disordered stretches follow at residues 12–57, 62–81, and 86–113; these read IKFK…MAAA, RLEQ…SIRN, and ELRA…EEGS. Residues 27–36 are compositionally biased toward basic and acidic residues; sequence VGEKAPKEKP. A VCP/p97-interacting motif (VIM) region spans residues 51–63; sequence EAQMAAAAALARL. The 70-residue stretch at 175-244 folds into the PUB domain; that stretch reads VDTIAKYLDN…GPEEFYVLSE (70 aa). The 77-residue stretch at 332–408 folds into the UBX domain; sequence RKYTYTLLRV…GLVPSALLTF (77 aa).

As to quaternary structure, interacts with VCP through the PUB domain (via C-terminus) and VIM motif (via N-terminus); the interaction is direct. Forms a ternary complex with CAV1 and VCP. Interacts with SYVN1. Interacts with HERPUD1. Interacts with VCPKMT. May interact with DERL1. Interacts with PLAA, VCP and YOD1; may form a complex involved in macroautophagy. Interacts with LMAN1.

It localises to the cytoplasm. The protein localises to the cytosol. Its subcellular location is the membrane. The protein resides in the nucleus. It is found in the cytoskeleton. It localises to the microtubule organizing center. The protein localises to the centrosome. Its subcellular location is the early endosome membrane. The protein resides in the late endosome membrane. It is found in the lysosome membrane. In terms of biological role, may negatively regulate the ATPase activity of VCP, an ATP-driven segregase that associates with different cofactors to control a wide variety of cellular processes. As a cofactor of VCP, it may play a role in the transport of CAV1 to lysosomes for degradation. It may also play a role in endoplasmic reticulum-associated degradation (ERAD) of misfolded proteins. Together with VCP and other cofactors, it may play a role in macroautophagy, regulating for instance the clearance of damaged lysosomes. The polypeptide is UBX domain-containing protein 6 (Bos taurus (Bovine)).